A 3456-amino-acid polypeptide reads, in one-letter code: MGKSKLTYKQCIAKWGKAALEAQNNGSRRSVSVGTHQIAANIFAFYDAKDYHLFAMGKRGGLTPAAEQLRIAIARGTIYKVQYNCHFCPDCDVIVDSEEGWFCEDCGSQFNKRDDNVLDNKNDVARALGGWNEYEDATWALFEAARADMLEVAPTVGQLEKEIRAIEKSAGKKLTAYEEEMLEELAYKLDVAKMNEEKQEEVLEETNFSISNDEFPALNGPQDEEVNVVIEETTEESAIEVAKEAEKSVEFEIIHEKTDEPISDAVNARMVATPVVATSVTKSGTVIDGKELVEKPKTTMWVTKPKTTAAIPATSSKSAVWVAKPKPASAIFIAEPVVKPAVRACNDVMNIGAMVCPIMVSANAQVEDATKEEEPVIKYNITFGSFNYEVSTKGERIQAAVQLDEIIEGPDIEPILICQTGSSHKSETKKAAKGLFVQDKFSVIGNKVLCKSFPAFNNFMNETRLGGIYRTRKGNYKNAALRLLKATKVQVFYDGIKDIFECPYCHVSSNELEGLNGDNCEKCKDLFYKHIDDPRKVEEEYLMVPLVPIDQHVHEEHSIISKAKWEAHESICEGEVNIVKIFDGKPTASKKKFKTMQAPNVANIPLDDFMQELVEICLERNTPIEIIGGVKSFNVVKLRHATRDISKSGEDDMYPTEREWFCHKNKLCLCGGIEREKKVRSFEVRPGWSGVILHKNQVAECDWDKFVFIDDICVVQGRNLITNKIENALEKKGATRLKQIQFYASSVVPNFKDEFDRASRLKADHEPYESSNNELIGRLARLVAAVIPKGHLYCKTCCLRVIKSKRADIVNALSKAKQRGERDEFIYDELIKLFELQAPPPYKIATITSDDDMFAHIRIGWKPYSGRLSLIMQHLQGLHTSISMLHQSLAGAQNDQQIDRQALHNQVRILHQRNEEHMPFLKKAVDEIQLLNATDQVANARELYLDTRATSTGDFDILRKYQSIYEFFPNIMSRANKVGMAVIKSETSLSKAFALMDNAKSMNAIHTLIGEDVIDNTSGACLMKNDKTFFSIGCKQGVDGSKMYGPLCPTKQHVRIHRVESNMQIPLPTFHDATVWEFNEGYCYANQLAIMVGFINEDEMEFYKNQMNQIVLNLGAWPTFEQYLVELRAISLDYPKVRGCPAAIHLVSHANKLIHVLGQFGTINQGWHALEVATVGELVDLCHKKVEGEMLTYKVGGIYDWVTKKNAFIDLFEHHPENIFKICTSPSVLWLFARSCEKHDFINDIMARDHSLVGLFIKLEYVGKHLHIFQSVDDVCVEYAASMREIIEEHADIHGLRDSVVDRMVHAYHNEVREANKYELVDRILEKNIGLIAKEISSRKLITMYHRDLFSWHEWQRLKLMPHSSNAQKLFEEANERAYGKQSWNLRVIWGACKEVLYAATHGVYVRVKGTTVRCADAVVYGFYGRTRAMVSSWASEAWGAIFTSCLRALVVMVVTAYISTWIPKIRKMIKREKKQFEDLGDGELYVEQHGKKEEAFLFKICAIFALIAGIVDYEWGAAACATMNKVRSICTVLGSVGIESHANEPNDKVEQDLKESLKFTSFEIEVPTWFYHNDMTFERWFQHQIQYGNVCADPIYSGPLRMLAITESSAREVAMNIRTSGETDVRVYSGVGGGKSTRLPKELSMFGHVLICVPTRVLAESLLTSFMVLFNMDVNVAYRGRIHTGNAPITIMTYGYALNFLVHKPMELNRYDYVLLDEINTNPVEFAPLFSFIKTTDPKKKIVKLSATHAGMDCECETRHKIKVETLSEMPIESWVSMQGSGVVGDATSVGDVILVFVASFKDVDTCANGLRSKGFKVLKVDSRNFRRDADVDKQIQSLGEGKKFIVATNIIENGVTFNIDVVVDFGEKISPNLSSDERCITLGRQRISRAERIQRFGRAGRIKPGTVLRFGRGNLVDALPSVLTATESALLCFAHGIKPVCDRVDVAAIGTLTRQQALVSGQFELNKLLVAHSATPSGQIPRVVYELFKPLLLRTDAVPICSSYNAIAACNWLPLSTYMRRNEKNEHVLATKIPWYCSDLSEDFNIKLAECVKSCMSTSNARFIVDNVNFITVAHKISVGEKTVGQAKLMVGELLENSKSWRDGLLHVQSSSVTRSLVGLCTSWYQRRAKAALDRLDLQVNRLQLLYDQLGQVEITSDYDKLVEFFTENGECAAYLESQSKTDFLEKHVLELRQPAITKNVVGTAMFAVALTGCLFWWWMKRNEKYEFIEQHGKKIRLNRDKRNACFVFSGTDDAMVEEYGVEYSQDVIHGRMSKAQKARQMKLKGKKPGSDTRVKPFKVLYGIDPNDYDTVALSAGGLTTEAVPVGEASLIDLMLELDDETGIFRKQVVNELKLKYTNNANGEQAMVRLTPHDSRRATIGSFMPSGFPDHHGEWRQTGAAEIIKEKNVAVDSHVGTPTVDAEDKHIASRLAIVRTHKGETHGIFHGDKLITPFHTFKNACGNDTLTVQSLRGLYDYGILSRQKMEQVPKQDIMVLVNPIDVTPFKQSQIFRPPIQCEVAYMIVCRRTPNGLRFEKTQETEIFPLGKQYGGVWKHGCDTRLGDCGGPIIACRDRKIVGFNGGRLMQMKYNTVLAHIFEPVNETFIEMLAKMEYAKGFWKFNPELVEWSRLLPTTTSFPIQKQIQGVESHGKPGDKCCGGNLISVGFANVTRISKHVIKGKRPSFVEYCNTYPDNIFMRDNLCEHYGPSILSKAAFYKDFTKYDDPVKVGRLDCYAFDTALAMVHDTLSQLGFHGNSGSQWDIAEIFDDLNKKSSMGALYSGKKGQWMHGLTPEDAISLAVESYALLNSGHLGVWSGSLKAELRHVDKLKEGKTRVFTGAPIDTLLAGKILVDNFNNYFYKCHLQGPWTVGINKFNRGWNKLANYFNHDWVFIDCDGSRFDSSIPPIMFNAVCMLRSVFGDLDPDENQTLSNLYTEIVNTPILTIEGNIIRKFRGNNSGQPSTVVDNTLILMIAMEYAIAKVFVTRPDIKYVCNGDDLLINCPRSTANAISEHFKDVFADLSLNYDFDHVCDKITDVDFMSHSFMWLDTEQMYIPKLDKERIVAILEWERSDEQFRTRSALNAAYIESFGYEDLMTEIEKFAHFWAKKHGLNDVLMEREKVRSLYVDENFDASRFEKFYPESFSPFDVYVEPHASTSKTIEELQQEMEDLDSDTTITVVQRETQKAGIRDQIEALRAQQIVRPPEAQLQPDVTPAQIVTFEPPRVTGFGALWIPRQQRNYMTPSYIEKIKAYVPHSNLIESGLASEAQLTSWFENTCRDYQVSMDVFMSTILPAWIVNCIINGTSQERTNEHTWRAVIMANMEDQEVLYYPIKPIIINAQPTLRQVMRHFGEQAVAQYMNSLQVGKPFTVKGAVTAGYANVQDAWLGIDFLRDTMKLTTKQMEVKHQIIAANVTRRKIRVFALAAPGDGDELDTERHVVDDVARGRHSLRGAQLD.

In terms of domain architecture, Peptidase S30 spans Asn-600–Tyr-743. Residues His-640, Asp-652, and Ser-689 each act as for P1 proteinase activity in the active site. Residues Val-1075–Gly-1196 enclose the Peptidase C6 domain. The For helper component proteinase activity role is filled by Cys-1083. One copy of the HAT 1 repeat lies at Phe-1094–Glu-1126. The active-site For helper component proteinase activity is the His-1155. The 152-residue stretch at Asn-1617–Leu-1768 folds into the Helicase ATP-binding domain. Position 1630–1637 (Ser-1630–Ser-1637) interacts with ATP. The region spanning Asp-1787–Asp-1947 is the Helicase C-terminal domain. Tyr-2304 is modified (O-(5'-phospho-RNA)-tyrosine). Residues Ala-2412–Thr-2636 form the Peptidase C4 domain. Catalysis depends on for nuclear inclusion protein A activity residues His-2457, Asp-2494, and Cys-2566. Residues His-2597–Trp-2629 form an HAT 2 repeat. The RdRp catalytic domain maps to Trp-2891–Ile-3011. The stretch at Leu-3082–Val-3115 is one HAT 3 repeat.

In terms of processing, VPg is uridylylated by the polymerase and is covalently attached to the 5'-end of the genomic RNA. This uridylylated form acts as a nucleotide-peptide primer for the polymerase. Post-translationally, genome polyprotein of potyviruses undergoes post-translational proteolytic processing by the main proteinase NIa-pro resulting in the production of at least ten individual proteins. The P1 proteinase and the HC-pro cleave only their respective C-termini autocatalytically. 6K1 is essential for proper proteolytic separation of P3 from CI.

The protein resides in the host cytoplasmic vesicle. It is found in the virion. It carries out the reaction RNA(n) + a ribonucleoside 5'-triphosphate = RNA(n+1) + diphosphate. The enzyme catalyses Hydrolyzes glutaminyl bonds, and activity is further restricted by preferences for the amino acids in P6 - P1' that vary with the species of potyvirus, e.g. Glu-Xaa-Xaa-Tyr-Xaa-Gln-|-(Ser or Gly) for the enzyme from tobacco etch virus. The natural substrate is the viral polyprotein, but other proteins and oligopeptides containing the appropriate consensus sequence are also cleaved.. The catalysed reaction is Hydrolyzes a Gly-|-Gly bond at its own C-terminus, commonly in the sequence -Tyr-Xaa-Val-Gly-|-Gly, in the processing of the potyviral polyprotein.. Required for aphid transmission and also has proteolytic activity. Only cleaves a Gly-Gly dipeptide at its own C-terminus. Interacts with virions and aphid stylets. Acts as a suppressor of RNA-mediated gene silencing, also known as post-transcriptional gene silencing (PTGS), a mechanism of plant viral defense that limits the accumulation of viral RNAs. May have RNA-binding activity. Its function is as follows. Has helicase activity. It may be involved in replication. Functionally, indispensable for virus replication. In terms of biological role, mediates the cap-independent, EIF4E-dependent translation of viral genomic RNAs. Binds to the cap-binding site of host EIF4E and thus interferes with the host EIF4E-dependent mRNA export and translation. VPg-RNA directly binds EIF4E and is a template for transcription. Also forms trimeric complexes with EIF4E-EIF4G, which are templates for translation. Has RNA-binding and proteolytic activities. Its function is as follows. An RNA-dependent RNA polymerase that plays an essential role in the virus replication. Functionally, involved in aphid transmission, cell-to-cell and systemis movement, encapsidation of the viral RNA and in the regulation of viral RNA amplification. This is Genome polyprotein from Sweet potato mild mottle virus (isolate Salazar) (SPMMV).